The chain runs to 362 residues: Prostaglandin F2-alpha receptor (362 aa).

Residues 1–31 lie on the Extracellular side of the membrane; it reads MSTNSSIQPVSPESELLSNTTCQLEEDLSIS. 2 N-linked (GlcNAc...) asparagine glycosylation sites follow: N4 and N19. The chain crosses the membrane as a helical span at residues 32–54; the sequence is FSIIFMTVGILSNSLAIAILMKA. The Cytoplasmic segment spans residues 55–69; the sequence is YQRFRQKYKSSFLLL. Residues 70–90 form a helical membrane-spanning segment; that stretch reads ASALVITDFFGHLINGTIAVF. At 91-109 the chain is on the extracellular side; the sequence is VYASDKDWIYFDKSNILCS. C108 and C186 are joined by a disulfide. Residues 110–131 traverse the membrane as a helical segment; the sequence is IFGICMVFSGLCPLFLGSLMAI. At 132–152 the chain is on the cytoplasmic side; sequence ERCIGVTKPIFHSTKITTKHV. Residues 153-175 traverse the membrane as a helical segment; sequence KMMLSGVCFFAVFVALLPILGHR. Topologically, residues 176–198 are extracellular; it reads DYKIQASRTWCFYKTDEIKDWED. Residues 199-224 traverse the membrane as a helical segment; that stretch reads RFYLLLFAFLGLLALGISFVCNAITG. Over 225–250 the chain is Cytoplasmic; it reads ISLLKVKFRSQQHRQGRSHHFEMVIQ. A helical transmembrane segment spans residues 251–267; it reads LLGIMCVSCICWSPFLV. At 268–285 the chain is on the extracellular side; that stretch reads TMASIGMNIQDFKDSCER. A helical transmembrane segment spans residues 286–307; that stretch reads TLFTLRMATWNQILDPWVYILL. Over 308–362 the chain is Cytoplasmic; it reads RKAVLRNLYVCTRRCCGVHVISLHVWELSSIKDSLKVAAISDLPVTEKVTQQTST.

This sequence belongs to the G-protein coupled receptor 1 family.

The protein localises to the cell membrane. Functionally, receptor for prostaglandin F2-alpha (PGF2-alpha). The activity of this receptor is mediated by G proteins which activate a phosphatidylinositol-calcium second messenger system. Initiates luteolysis in the corpus luteum. In Bos taurus (Bovine), this protein is Prostaglandin F2-alpha receptor (PTGFR).